The following is a 440-amino-acid chain: Glutamate-1-semialdehyde 2,1-aminomutase (440 aa).

Residue K273 is modified to N6-(pyridoxal phosphate)lysine.

Belongs to the class-III pyridoxal-phosphate-dependent aminotransferase family. HemL subfamily. As to quaternary structure, homodimer. Requires pyridoxal 5'-phosphate as cofactor.

It localises to the cytoplasm. It carries out the reaction (S)-4-amino-5-oxopentanoate = 5-aminolevulinate. It participates in porphyrin-containing compound metabolism; protoporphyrin-IX biosynthesis; 5-aminolevulinate from L-glutamyl-tRNA(Glu): step 2/2. This Alkaliphilus metalliredigens (strain QYMF) protein is Glutamate-1-semialdehyde 2,1-aminomutase.